Consider the following 563-residue polypeptide: Type 2 DNA topoisomerase 6 subunit B (563 aa).

Residues asparagine 46, aspartate 78, 99–100 (TK), 109–116 (GQQGIGIS), and lysine 471 each bind ATP.

The protein belongs to the TOP6B family. As to quaternary structure, homodimer. Heterotetramer of two Top6A and two Top6B chains.

It catalyses the reaction ATP-dependent breakage, passage and rejoining of double-stranded DNA.. Relaxes both positive and negative superturns and exhibits a strong decatenase activity. The sequence is that of Type 2 DNA topoisomerase 6 subunit B from Thermococcus onnurineus (strain NA1).